The chain runs to 319 residues: Carbonic anhydrase 6 (319 aa).

An N-terminal signal peptide occupies residues 1–14 (MITLLFLLVVGAQA). One can recognise an Alpha-carbonic anhydrase domain in the interval 16-273 (HEWTYSEGVL…LNHRVVEANF (258 aa)). C37 and C219 are joined by a disulfide. N62 is a glycosylation site (N-linked (GlcNAc...) asparagine). H80 (proton donor/acceptor) is an active-site residue. 3 residues coordinate Zn(2+): H106, H108, and H133. 215-216 (TT) serves as a coordination point for substrate. N-linked (GlcNAc...) asparagine glycosylation occurs at N251.

It belongs to the alpha-carbonic anhydrase family. Zn(2+) is required as a cofactor. Major constituent of saliva.

The protein resides in the secreted. The enzyme catalyses hydrogencarbonate + H(+) = CO2 + H2O. Its function is as follows. Reversible hydration of carbon dioxide. Its role in saliva is unknown. The polypeptide is Carbonic anhydrase 6 (CA6) (Bos taurus (Bovine)).